Consider the following 66-residue polypeptide: DNA-directed RNA polymerase subunit omega (66 aa).

Belongs to the RNA polymerase subunit omega family. In terms of assembly, the RNAP catalytic core consists of 2 alpha, 1 beta, 1 beta' and 1 omega subunit. When a sigma factor is associated with the core the holoenzyme is formed, which can initiate transcription.

It catalyses the reaction RNA(n) + a ribonucleoside 5'-triphosphate = RNA(n+1) + diphosphate. Promotes RNA polymerase assembly. Latches the N- and C-terminal regions of the beta' subunit thereby facilitating its interaction with the beta and alpha subunits. This chain is DNA-directed RNA polymerase subunit omega, found in Bacillus licheniformis (strain ATCC 14580 / DSM 13 / JCM 2505 / CCUG 7422 / NBRC 12200 / NCIMB 9375 / NCTC 10341 / NRRL NRS-1264 / Gibson 46).